The chain runs to 138 residues: Small ribosomal subunit protein uS11c (138 aa).

It belongs to the universal ribosomal protein uS11 family. As to quaternary structure, part of the 30S ribosomal subunit.

It is found in the plastid. The sequence is that of Small ribosomal subunit protein uS11c from Cuscuta obtusiflora (Peruvian dodder).